A 111-amino-acid chain; its full sequence is Translation initiation factor 1A 1 (111 aa).

A disordered region spans residues 1–26 (MTLADLKKPTSRATPSTEETFTRVRT). The S1-like domain maps to 22-96 (TRVRTPRREN…EKADVIWKYT (75 aa)).

The protein belongs to the eIF-1A family.

In terms of biological role, seems to be required for maximal rate of protein biosynthesis. Enhances ribosome dissociation into subunits and stabilizes the binding of the initiator Met-tRNA(I) to 40 S ribosomal subunits. The chain is Translation initiation factor 1A 1 (eIF1A1) from Methanosarcina acetivorans (strain ATCC 35395 / DSM 2834 / JCM 12185 / C2A).